A 911-amino-acid polypeptide reads, in one-letter code: Leucine--tRNA ligase (911 aa).

A 'HIGH' region motif is present at residues 42–52 (PYPSGKLHMGH). Positions 659-663 (TMSKS) match the 'KMSKS' region motif. Position 662 (K662) interacts with ATP.

Belongs to the class-I aminoacyl-tRNA synthetase family.

It localises to the cytoplasm. It carries out the reaction tRNA(Leu) + L-leucine + ATP = L-leucyl-tRNA(Leu) + AMP + diphosphate. The sequence is that of Leucine--tRNA ligase from Delftia acidovorans (strain DSM 14801 / SPH-1).